The primary structure comprises 445 residues: MGNQENKLYHFVGIKGSGMSSLALVLHQKGYNVQGSDVEEYFFTQRDLEKSGVPILPFNADNIDKDMIVIAGNAFPDTHEEIARAIELGAEVIRYHDFIARFIEPYTSIAVTGSHGKTSTTGLLAHVLSGINPTSYLIGDGTGHGEPDADFFAFEACEYRRHFLAYSPDYAIMTNIDFDHPDYYKSIEDVFSAFQTMAHQVKKGIFAYGDDKYLRQLESEVPVYYYGVSEEDDIQARNIQRTTEGSSFDVYHKDDFVGHFVLPAFGHHNIMNALGVIAVAYFEKLDMQKVAEEMLSFKGVKRRFSEKKVSDMIIVDDYAHHPAEIKATIDGARQKYPDKEIIAVFQPHTFTRTIALMDEFAEALDLADEVFLCNIFGSARETQGEVRIEDLGEKIQKGGQVITEDNVSPLLDFENAVVVFMGAGDVQKFEQAYETLLSNTTRNVL.

113 to 119 (GSHGKTS) contacts ATP.

It belongs to the MurCDEF family.

The protein resides in the cytoplasm. The enzyme catalyses UDP-N-acetyl-alpha-D-muramate + L-alanine + ATP = UDP-N-acetyl-alpha-D-muramoyl-L-alanine + ADP + phosphate + H(+). It participates in cell wall biogenesis; peptidoglycan biosynthesis. In terms of biological role, cell wall formation. This chain is UDP-N-acetylmuramate--L-alanine ligase, found in Enterococcus faecalis (strain ATCC 700802 / V583).